The following is a 651-amino-acid chain: MGCCGSTQNSKRDWRPLEEHSCTDIPWLLLFILFCVGMGFICGFSIATGAASRLVFGYDSYGNICGQKNTKIEGFINSGLDHSNNKYVFFLDPCKLDLVNRKIKSIALCVSECPREELQTLNDVKKFAETNGSALCDYSLTPSQYTTDSRAPSLCPKLPVPKSAPIPFFHRCAPVNISCYAKFAEALITFVSDNSVLHRLISGVMTSKEIIMGLCLLSLVLSMILMVIIRYISRVLVWIITILVVLGSLGGTGVLWWLYADNKKSLNENLPPDQLQVSKDNLQALLVYAIAATVFTVILLLMMLIMRKRVALTIALFNVAGKVFIHLPLLVFQPFWTFFALLLFWVYWVMVLLFLGTAGDPFTNEQGFVEFRINGPLQYMWWYHLVGLIWISEFILACQQMTIAGAVVTYYFTRNKNDLPFTPILASVNRLIRYHLGTVAKGAFIITLVKIPRMILMYIHSQLKGKENACARCMLKSCICCLWCLEKCLAYLNQNAYTATAINSTNFCTSAKDALVILVENALRVAAINTVGDFMLFLGKILIVSCTGLAGIMLLNYQRDYTVWVLPLIIVCLFAFLVAHCFLSIYEMVVDVLFLCFAIDTKYNDGSPGKEFYMDKVLMEFVEDSRRALKEPGSTAEGRELKPMASGTSTA.

Over 1–25 (MGCCGSTQNSKRDWRPLEEHSCTDI) the chain is Cytoplasmic. The helical transmembrane segment at 26–46 (PWLLLFILFCVGMGFICGFSI) threads the bilayer. The Extracellular segment spans residues 47–208 (ATGAASRLVF…RLISGVMTSK (162 aa)). N-linked (GlcNAc...) asparagine glycosylation is found at N131 and N176. The helical transmembrane segment at 209-229 (EIIMGLCLLSLVLSMILMVII) threads the bilayer. The Cytoplasmic segment spans residues 230–234 (RYISR). A helical transmembrane segment spans residues 235-255 (VLVWIITILVVLGSLGGTGVL). Residues 256–284 (WWLYADNKKSLNENLPPDQLQVSKDNLQA) lie on the Extracellular side of the membrane. Residues 285–305 (LLVYAIAATVFTVILLLMMLI) form a helical membrane-spanning segment. Over 306–311 (MRKRVA) the chain is Cytoplasmic. Residues 312–332 (LTIALFNVAGKVFIHLPLLVF) traverse the membrane as a helical segment. The Extracellular portion of the chain corresponds to 333–334 (QP). The chain crosses the membrane as a helical span at residues 335-355 (FWTFFALLLFWVYWVMVLLFL). The Cytoplasmic segment spans residues 356-376 (GTAGDPFTNEQGFVEFRINGP). The chain crosses the membrane as a helical span at residues 377–397 (LQYMWWYHLVGLIWISEFILA). At 398 to 438 (CQQMTIAGAVVTYYFTRNKNDLPFTPILASVNRLIRYHLGT) the chain is on the extracellular side. A helical membrane pass occupies residues 439–459 (VAKGAFIITLVKIPRMILMYI). Over 460-533 (HSQLKGKENA…RVAAINTVGD (74 aa)) the chain is Cytoplasmic. The helical transmembrane segment at 534–554 (FMLFLGKILIVSCTGLAGIML) threads the bilayer. Over 555-562 (LNYQRDYT) the chain is Extracellular. A helical transmembrane segment spans residues 563-583 (VWVLPLIIVCLFAFLVAHCFL). At 584-651 (SIYEMVVDVL…KPMASGTSTA (68 aa)) the chain is on the cytoplasmic side. The interval 629–651 (LKEPGSTAEGRELKPMASGTSTA) is disordered.

This sequence belongs to the CTL (choline transporter-like) family.

The protein resides in the cell membrane. The protein localises to the mitochondrion outer membrane. It catalyses the reaction choline(out) + n H(+)(in) = choline(in) + n H(+)(out). The enzyme catalyses ethanolamine(out) + n H(+)(in) = ethanolamine(in) + n H(+)(out). Functionally, choline/H+ antiporter. Also acts as a high-affinity ethanolamine/H+ antiporter, regulating the supply of extracellular ethanolamine (Etn) for the CDP-Etn pathway, redistribute intracellular Etn and balance the CDP-Cho and CDP-Etn arms of the Kennedy pathway. Involved in membrane synthesis and myelin production. In Xenopus laevis (African clawed frog), this protein is Choline transporter-like protein 1 (slc44a1).